The chain runs to 510 residues: 2,3-bisphosphoglycerate-independent phosphoglycerate mutase (510 aa).

Mn(2+)-binding residues include Asp12 and Ser62. Ser62 (phosphoserine intermediate) is an active-site residue. Residues His123, 153 to 154 (RD), Arg185, Arg191, 260 to 263 (RPDR), and Lys335 contribute to the substrate site. 5 residues coordinate Mn(2+): Asp402, His406, Asp443, His444, and His461.

Belongs to the BPG-independent phosphoglycerate mutase family. In terms of assembly, monomer. Mn(2+) serves as cofactor.

It catalyses the reaction (2R)-2-phosphoglycerate = (2R)-3-phosphoglycerate. It participates in carbohydrate degradation; glycolysis; pyruvate from D-glyceraldehyde 3-phosphate: step 3/5. Catalyzes the interconversion of 2-phosphoglycerate and 3-phosphoglycerate. The polypeptide is 2,3-bisphosphoglycerate-independent phosphoglycerate mutase (Listeria monocytogenes serovar 1/2a (strain ATCC BAA-679 / EGD-e)).